A 229-amino-acid chain; its full sequence is Urease accessory protein UreF (229 aa).

The protein belongs to the UreF family. As to quaternary structure, ureD, UreF and UreG form a complex that acts as a GTP-hydrolysis-dependent molecular chaperone, activating the urease apoprotein by helping to assemble the nickel containing metallocenter of UreC. The UreE protein probably delivers the nickel.

Its subcellular location is the cytoplasm. Its function is as follows. Required for maturation of urease via the functional incorporation of the urease nickel metallocenter. The protein is Urease accessory protein UreF of Staphylococcus aureus (strain USA300).